Reading from the N-terminus, the 687-residue chain is Glycine--tRNA ligase beta subunit (687 aa).

Belongs to the class-II aminoacyl-tRNA synthetase family. As to quaternary structure, tetramer of two alpha and two beta subunits.

Its subcellular location is the cytoplasm. It carries out the reaction tRNA(Gly) + glycine + ATP = glycyl-tRNA(Gly) + AMP + diphosphate. The chain is Glycine--tRNA ligase beta subunit from Neisseria meningitidis serogroup B (strain ATCC BAA-335 / MC58).